Here is a 275-residue protein sequence, read N- to C-terminus: ORF2/4 protein (275 aa).

Disordered regions lie at residues 44–103 (LGRP…DGEL) and 116–207 (ADPQ…PPPT). Over residues 79–98 (GTGGDAAGGEAGGSRGAGDG) the composition is skewed to gly residues. Residues 129 to 139 (GQRKNARKRLR) show a composition bias toward basic residues. Residues 170 to 188 (TRTTSPAAPAAATPQSPAR) show a composition bias toward low complexity.

In Torque teno virus (isolate Human/Finland/Hel32/2002) (TTV), this protein is ORF2/4 protein.